A 302-amino-acid polypeptide reads, in one-letter code: Glutaminase (302 aa).

7 residues coordinate substrate: Ser-61, Asn-111, Glu-155, Asn-162, Tyr-186, Tyr-238, and Val-256.

This sequence belongs to the glutaminase family. Homotetramer.

The enzyme catalyses L-glutamine + H2O = L-glutamate + NH4(+). The polypeptide is Glutaminase (Pseudomonas savastanoi pv. phaseolicola (strain 1448A / Race 6) (Pseudomonas syringae pv. phaseolicola (strain 1448A / Race 6))).